A 139-amino-acid polypeptide reads, in one-letter code: Small ribosomal subunit protein uS11 (139 aa).

The interval 117–139 (VEDVTPIPHDGTRPKGGRRGRRV) is disordered.

Belongs to the universal ribosomal protein uS11 family. Part of the 30S ribosomal subunit.

Functionally, located on the platform of the 30S subunit. This is Small ribosomal subunit protein uS11 from Thermococcus onnurineus (strain NA1).